A 284-amino-acid polypeptide reads, in one-letter code: Exported repetitive protein (284 aa).

Residues 1–22 form the signal peptide; that stretch reads MPNRRRRKLSTAMSAVAALAVA. Residues 23-252 lie on the Extracellular side of the membrane; it reads SPCAYFLVYE…MPSIMQAVQN (230 aa). Positions 80 to 216 are disordered; sequence TGSGDASTGL…SPATTSTGGG (137 aa). Low complexity predominate over residues 86–110; that stretch reads STGLTGPGLTSPGLTSPGLTSPGLT. 12 repeat units span residues 92 to 96, 97 to 101, 102 to 106, 107 to 111, 112 to 116, 117 to 121, 144 to 148, 149 to 153, 154 to 158, 159 to 163, 164 to 168, and 169 to 173. The 6 X 5 AA tandem repeats of P-[GA]-L-T-S stretch occupies residues 92-121; it reads PGLTSPGLTSPGLTSPGLTDPALTSPGLTP. The 6 X 5 AA approximate tandem repeats of P-[ATG]-[LG]-X-X stretch occupies residues 144–173; that stretch reads PALTNPALTSPTGATPGLTSPTGLDPALGG. A compositionally biased stretch (polar residues) spans 145–165; sequence ALTNPALTSPTGATPGLTSPT. The segment covering 202–212 has biased composition (low complexity); it reads GTIPSSPATTS. The chain crosses the membrane as a helical span at residues 253–273; it reads GGAAAPAASPPVPPIPAAAAV. Over 274–284 the chain is Cytoplasmic; sequence PPTDPITVPVA.

It to M.leprae 28 kDa antigen.

It is found in the cell membrane. Surface-exposed protein required for multiplication and intracellular growth. The polypeptide is Exported repetitive protein (erp) (Mycobacterium bovis (strain ATCC BAA-935 / AF2122/97)).